Reading from the N-terminus, the 303-residue chain is Aspartate carbamoyltransferase catalytic subunit (303 aa).

R51 and T52 together coordinate carbamoyl phosphate. K80 serves as a coordination point for L-aspartate. Carbamoyl phosphate-binding residues include R101, H129, and Q132. The L-aspartate site is built by R162 and R221. The carbamoyl phosphate site is built by L260 and P261.

This sequence belongs to the aspartate/ornithine carbamoyltransferase superfamily. ATCase family. In terms of assembly, heterooligomer of catalytic and regulatory chains.

The catalysed reaction is carbamoyl phosphate + L-aspartate = N-carbamoyl-L-aspartate + phosphate + H(+). It participates in pyrimidine metabolism; UMP biosynthesis via de novo pathway; (S)-dihydroorotate from bicarbonate: step 2/3. In terms of biological role, catalyzes the condensation of carbamoyl phosphate and aspartate to form carbamoyl aspartate and inorganic phosphate, the committed step in the de novo pyrimidine nucleotide biosynthesis pathway. The chain is Aspartate carbamoyltransferase catalytic subunit from Saccharolobus islandicus (strain M.16.27) (Sulfolobus islandicus).